Here is a 354-residue protein sequence, read N- to C-terminus: Methylthioribose-1-phosphate isomerase (354 aa).

Residues 48 to 50 (RGA), arginine 95, and glutamine 202 contribute to the substrate site. The active-site Proton donor is the aspartate 243. Position 253-254 (253-254 (NK)) interacts with substrate.

The protein belongs to the eIF-2B alpha/beta/delta subunits family. MtnA subfamily.

The enzyme catalyses 5-(methylsulfanyl)-alpha-D-ribose 1-phosphate = 5-(methylsulfanyl)-D-ribulose 1-phosphate. It functions in the pathway amino-acid biosynthesis; L-methionine biosynthesis via salvage pathway; L-methionine from S-methyl-5-thio-alpha-D-ribose 1-phosphate: step 1/6. Functionally, catalyzes the interconversion of methylthioribose-1-phosphate (MTR-1-P) into methylthioribulose-1-phosphate (MTRu-1-P). The sequence is that of Methylthioribose-1-phosphate isomerase from Roseiflexus castenholzii (strain DSM 13941 / HLO8).